The following is a 492-amino-acid chain: Catalase isozyme 2 (492 aa).

Active-site residues include His65 and Asn138. Heme is bound at residue Tyr347.

The protein belongs to the catalase family. As to quaternary structure, homotetramer. Heme is required as a cofactor. As to expression, high levels in green cotyledons, mature leaf, stem and green hypocotyl.

It is found in the peroxisome. It catalyses the reaction 2 H2O2 = O2 + 2 H2O. Occurs in almost all aerobically respiring organisms and serves to protect cells from the toxic effects of hydrogen peroxide. The sequence is that of Catalase isozyme 2 (CAT2) from Cucurbita pepo (Vegetable marrow).